The following is a 200-amino-acid chain: ATP-dependent Clp protease proteolytic subunit 3 (200 aa).

The active-site Nucleophile is the S101. Residue H126 is part of the active site.

It belongs to the peptidase S14 family. In terms of assembly, fourteen ClpP subunits assemble into 2 heptameric rings which stack back to back to give a disk-like structure with a central cavity, resembling the structure of eukaryotic proteasomes.

Its subcellular location is the cytoplasm. It carries out the reaction Hydrolysis of proteins to small peptides in the presence of ATP and magnesium. alpha-casein is the usual test substrate. In the absence of ATP, only oligopeptides shorter than five residues are hydrolyzed (such as succinyl-Leu-Tyr-|-NHMec, and Leu-Tyr-Leu-|-Tyr-Trp, in which cleavage of the -Tyr-|-Leu- and -Tyr-|-Trp bonds also occurs).. Functionally, cleaves peptides in various proteins in a process that requires ATP hydrolysis. Has a chymotrypsin-like activity. Plays a major role in the degradation of misfolded proteins. This Synechococcus sp. (strain CC9902) protein is ATP-dependent Clp protease proteolytic subunit 3.